We begin with the raw amino-acid sequence, 249 residues long: Phosphoribosylaminoimidazole-succinocarboxamide synthase (249 aa).

This sequence belongs to the SAICAR synthetase family.

The enzyme catalyses 5-amino-1-(5-phospho-D-ribosyl)imidazole-4-carboxylate + L-aspartate + ATP = (2S)-2-[5-amino-1-(5-phospho-beta-D-ribosyl)imidazole-4-carboxamido]succinate + ADP + phosphate + 2 H(+). The protein operates within purine metabolism; IMP biosynthesis via de novo pathway; 5-amino-1-(5-phospho-D-ribosyl)imidazole-4-carboxamide from 5-amino-1-(5-phospho-D-ribosyl)imidazole-4-carboxylate: step 1/2. This Roseiflexus sp. (strain RS-1) protein is Phosphoribosylaminoimidazole-succinocarboxamide synthase.